The chain runs to 104 residues: uncharacterized protein (104 aa).

The stretch at V24–S69 forms a coiled coil.

This is an uncharacterized protein from Acanthamoeba polyphaga mimivirus (APMV).